The chain runs to 439 residues: Keratin, type I cytoskeletal 40 (439 aa).

The segment at 1 to 89 (MASDGSPSCC…CEEGSFNSNE (89 aa)) is head. The 312-residue stretch at 89 to 400 (EKETMQFLND…GLLEKEDSRL (312 aa)) folds into the IF rod domain. The interval 90-124 (KETMQFLNDRLASYLERVRSLEENNAELECRIREQ) is coil 1A. Positions 125-135 (CEPNAPLVCPD) are linker 1. Residues 136–236 (YQRYFDTIEE…HEEEVNLLRE (101 aa)) are coil 1B. The segment at 237–252 (QLGDRLSVELDTAPTV) is linker 12. The segment at 253-396 (DLNKVLDEMR…NTYRGLLEKE (144 aa)) is coil 2. Residues 397–439 (DSRLPCNPGSGAPMPNSTCEPCSNSMCEPCSAYVICTVENCCA) are tail.

Belongs to the intermediate filament family. As to quaternary structure, heterotetramer of two type I and two type II keratins.

May play a role in late hair differentiation. This Mus musculus (Mouse) protein is Keratin, type I cytoskeletal 40 (Krt40).